The chain runs to 196 residues: Putative 3-methyladenine DNA glycosylase (196 aa).

Belongs to the DNA glycosylase MPG family.

The chain is Putative 3-methyladenine DNA glycosylase from Bacillus licheniformis (strain ATCC 14580 / DSM 13 / JCM 2505 / CCUG 7422 / NBRC 12200 / NCIMB 9375 / NCTC 10341 / NRRL NRS-1264 / Gibson 46).